Here is a 118-residue protein sequence, read N- to C-terminus: Small ribosomal subunit protein uS13 (118 aa).

The segment at 94–118 is disordered; the sequence is SLPLRGQRTKTNARTRKGPRKPIKK.

The protein belongs to the universal ribosomal protein uS13 family. In terms of assembly, part of the 30S ribosomal subunit. Forms a loose heterodimer with protein S19. Forms two bridges to the 50S subunit in the 70S ribosome.

Functionally, located at the top of the head of the 30S subunit, it contacts several helices of the 16S rRNA. In the 70S ribosome it contacts the 23S rRNA (bridge B1a) and protein L5 of the 50S subunit (bridge B1b), connecting the 2 subunits; these bridges are implicated in subunit movement. Contacts the tRNAs in the A and P-sites. This is Small ribosomal subunit protein uS13 from Aliivibrio fischeri (strain ATCC 700601 / ES114) (Vibrio fischeri).